Reading from the N-terminus, the 310-residue chain is Antiviral protein II/III (310 aa).

Residues Met1–Ser25 form the signal peptide. Disulfide bonds link Cys57–Cys284 and Cys106–Cys123. Tyr94 is an active-site residue. Residues Tyr142, Glu197, and Arg200 contribute to the active site.

It belongs to the ribosome-inactivating protein family. Type 1 RIP subfamily. PAP-II is expressed in early summer leaves (at protein level). PAP-III is expressed in late summer leaves (at protein level).

The enzyme catalyses Endohydrolysis of the N-glycosidic bond at one specific adenosine on the 28S rRNA.. Functionally, possesses antiviral potency. Inhibits viral infection of plants (tobacco mosaic virus). Inhibits protein synthesis in both prokaryotes and eukaryotes. The chain is Antiviral protein II/III (PAP2) from Phytolacca americana (American pokeweed).